Consider the following 466-residue polypeptide: Acetylornithine aminotransferase, mitochondrial (466 aa).

Lysine 308 is subject to N6-(pyridoxal phosphate)lysine.

It belongs to the class-III pyridoxal-phosphate-dependent aminotransferase family. The cofactor is pyridoxal 5'-phosphate.

It localises to the mitochondrion matrix. It carries out the reaction N(2)-acetyl-L-ornithine + 2-oxoglutarate = N-acetyl-L-glutamate 5-semialdehyde + L-glutamate. It participates in amino-acid biosynthesis; L-arginine biosynthesis; N(2)-acetyl-L-ornithine from L-glutamate: step 4/4. The chain is Acetylornithine aminotransferase, mitochondrial (ARG8) from Debaryomyces hansenii (strain ATCC 36239 / CBS 767 / BCRC 21394 / JCM 1990 / NBRC 0083 / IGC 2968) (Yeast).